A 418-amino-acid chain; its full sequence is uncharacterized protein (418 aa).

10 consecutive transmembrane segments (helical) span residues 51–71 (FVMA…GALV), 79–99 (ALVV…PLFA), 110–130 (VTGI…LGAV), 163–183 (FFGP…SVLA), 224–244 (VIFG…LPLV), 258–278 (ALMS…AYVV), 289–309 (PIFL…TLSD), 315–335 (VGVQ…FPLV), 356–376 (ATGI…VVAG), and 379–399 (AAFM…LVAM).

The protein belongs to the major facilitator superfamily.

It localises to the cell membrane. This is an uncharacterized protein from Mycobacterium tuberculosis (strain CDC 1551 / Oshkosh).